Consider the following 359-residue polypeptide: Membrane-bound lytic murein transglycosylase C (359 aa).

A signal peptide spans 1 to 16 (MKKYLALALIAPLLIS). C17 carries N-palmitoyl cysteine lipidation. The S-diacylglycerol cysteine moiety is linked to residue C17.

The protein belongs to the transglycosylase Slt family.

It is found in the cell outer membrane. The catalysed reaction is Exolytic cleavage of the (1-&gt;4)-beta-glycosidic linkage between N-acetylmuramic acid (MurNAc) and N-acetylglucosamine (GlcNAc) residues in peptidoglycan, from either the reducing or the non-reducing ends of the peptidoglycan chains, with concomitant formation of a 1,6-anhydrobond in the MurNAc residue.. Functionally, murein-degrading enzyme. May play a role in recycling of muropeptides during cell elongation and/or cell division. In Escherichia coli O7:K1 (strain IAI39 / ExPEC), this protein is Membrane-bound lytic murein transglycosylase C.